A 450-amino-acid polypeptide reads, in one-letter code: Phosphoglucosamine mutase (450 aa).

The Phosphoserine intermediate role is filled by S101. Residues S101, D240, D242, and D244 each contribute to the Mg(2+) site. S101 is subject to Phosphoserine.

The protein belongs to the phosphohexose mutase family. The cofactor is Mg(2+). Activated by phosphorylation.

It catalyses the reaction alpha-D-glucosamine 1-phosphate = D-glucosamine 6-phosphate. Catalyzes the conversion of glucosamine-6-phosphate to glucosamine-1-phosphate. In Streptococcus thermophilus (strain CNRZ 1066), this protein is Phosphoglucosamine mutase.